The chain runs to 321 residues: Glucokinase (321 aa).

8–13 (GDVGGT) serves as a coordination point for ATP.

The protein belongs to the bacterial glucokinase family.

It is found in the cytoplasm. It carries out the reaction D-glucose + ATP = D-glucose 6-phosphate + ADP + H(+). In Salmonella choleraesuis (strain SC-B67), this protein is Glucokinase.